The primary structure comprises 299 residues: Protoheme IX farnesyltransferase 1 (299 aa).

8 consecutive transmembrane segments (helical) span residues 25–45, 47–67, 95–115, 119–139, 147–167, 173–193, 226–246, and 279–299; these read VVVL…RAGV, WTVL…AAAV, TGAL…LLTF, LTAW…TGFL, IVIG…AATG, PLLL…ALAI, ALLA…LYLI, and IWYL…LLNL.

It belongs to the UbiA prenyltransferase family. Protoheme IX farnesyltransferase subfamily.

It is found in the cell inner membrane. The catalysed reaction is heme b + (2E,6E)-farnesyl diphosphate + H2O = Fe(II)-heme o + diphosphate. It functions in the pathway porphyrin-containing compound metabolism; heme O biosynthesis; heme O from protoheme: step 1/1. Functionally, converts heme B (protoheme IX) to heme O by substitution of the vinyl group on carbon 2 of heme B porphyrin ring with a hydroxyethyl farnesyl side group. The chain is Protoheme IX farnesyltransferase 1 from Pseudomonas fluorescens (strain Pf0-1).